Here is a 393-residue protein sequence, read N- to C-terminus: Methylthioribose kinase (393 aa).

ATP is bound by residues N38, K53, and 107 to 109; that span reads EDL. Position 225 (D225) interacts with substrate. 242–244 is an ATP binding site; sequence DPE. R332 contributes to the substrate binding site.

It belongs to the methylthioribose kinase family. As to quaternary structure, homodimer.

It catalyses the reaction 5-(methylsulfanyl)-D-ribose + ATP = 5-(methylsulfanyl)-alpha-D-ribose 1-phosphate + ADP + H(+). It functions in the pathway amino-acid biosynthesis; L-methionine biosynthesis via salvage pathway; S-methyl-5-thio-alpha-D-ribose 1-phosphate from S-methyl-5'-thioadenosine (hydrolase route): step 2/2. In terms of biological role, catalyzes the phosphorylation of methylthioribose into methylthioribose-1-phosphate. In Bacillus cereus (strain G9842), this protein is Methylthioribose kinase.